The primary structure comprises 427 residues: Endothelin-1 receptor (427 aa).

The N-terminal stretch at 1 to 20 (METFWLRVSFWVALVGGVIS) is a signal peptide. Topologically, residues 21 to 80 (DNPESYSTNLSIHVDSVTTFRGTELSFVVTTHQPTNLALPSNGSMHNYCPQQTKITSAFK) are extracellular. N-linked (GlcNAc...) asparagine glycosylation is found at Asn-29 and Asn-62. A helical membrane pass occupies residues 81–102 (YINTVISCTIFIVGMVGNATLL). Residues 103–112 (RIIYQNKCMR) lie on the Cytoplasmic side of the membrane. Residues 113-132 (NGPNALIASLALGDLIYVVI) form a helical membrane-spanning segment. The Extracellular segment spans residues 133–159 (DLPINVFKLLAGRWPFEQNDFGVFLCK). A disulfide bond links Cys-158 and Cys-239. Residues 160–181 (LFPFLQKSSVGITVLNLCALSV) form a helical membrane-spanning segment. Over 182–205 (DRYRAVASWSRVQGIGIPLVTAIE) the chain is Cytoplasmic. A helical membrane pass occupies residues 206–229 (IVSIWILSFILAIPEAIGFVMVPF). The Extracellular portion of the chain corresponds to 230–256 (EYKGAQHRTCMLNATSKFMEFYQDVKD). Residues 257–278 (WWLFGFYFCMPLVCTAIFYTLM) form a helical membrane-spanning segment. The Cytoplasmic portion of the chain corresponds to 279 to 306 (TCEMLNRRNGSLRIALSEHLKQRREVAK). Residues 307-328 (TVFCLVVIFALCWFPLHLSRIL) traverse the membrane as a helical segment. Over 329–347 (KKTVYDEMDTNRCELLSFL) the chain is Extracellular. A helical membrane pass occupies residues 348–372 (LLMDYIGINLATMNSCINPIALYFV). The Cytoplasmic portion of the chain corresponds to 373-427 (SKKFKNCFQSCLCCCCYQSKSLMTSVPMNGTSIQWKNPEQNNHNTERSSHKDSIN). The span at 405–415 (IQWKNPEQNNH) shows a compositional bias: polar residues. The disordered stretch occupies residues 405–427 (IQWKNPEQNNHNTERSSHKDSIN). Residues 416 to 427 (NTERSSHKDSIN) show a composition bias toward basic and acidic residues. Residue Ser-425 is modified to Phosphoserine.

This sequence belongs to the G-protein coupled receptor 1 family. Endothelin receptor subfamily. EDNRA sub-subfamily. As to quaternary structure, interacts with HDAC7 and KAT5.

The protein localises to the cell membrane. In terms of biological role, receptor for endothelin-1. Mediates its action by association with G proteins that activate a phosphatidylinositol-calcium second messenger system. The rank order of binding affinities for ET-A is: ET1 &gt; ET2 &gt;&gt; ET3. The chain is Endothelin-1 receptor from Ovis aries (Sheep).